Here is a 459-residue protein sequence, read N- to C-terminus: Cysteine--tRNA ligase (459 aa).

Residue cysteine 29 participates in Zn(2+) binding. Residues 31–41 carry the 'HIGH' region motif; it reads VTTYDYCHIGH. 3 residues coordinate Zn(2+): cysteine 210, histidine 235, and glutamate 239. Residues 267–271 carry the 'KMSKS' region motif; it reads KMSKS. Lysine 270 contributes to the ATP binding site.

This sequence belongs to the class-I aminoacyl-tRNA synthetase family. As to quaternary structure, monomer. The cofactor is Zn(2+).

It localises to the cytoplasm. It catalyses the reaction tRNA(Cys) + L-cysteine + ATP = L-cysteinyl-tRNA(Cys) + AMP + diphosphate. The protein is Cysteine--tRNA ligase of Idiomarina loihiensis (strain ATCC BAA-735 / DSM 15497 / L2-TR).